A 248-amino-acid chain; its full sequence is Transcription factor MYB1 (248 aa).

HTH myb-type domains follow at residues 9 to 61 and 62 to 116; these read KEGM…LNYL and RPGI…GRRV. 2 consecutive DNA-binding regions (H-T-H motif) follow at residues 37-61 and 89-112; these read WRSL…LNYL and WSLI…NTNL. The interval 118–144 is disordered; that stretch reads DQSHQHCRPNPTITSTKPADAPPANAN.

Its subcellular location is the nucleus. Transcription activator involved in the spatiotemporal regulation of flavonoid biosynthesis specifically in the corms of Montbretia. Activates the promoters of enzymes involved in the biosynthesis of the flavonol kaempferol and the flavonol-glycoside kaempferol-rhamnoside. The protein is Transcription factor MYB1 of Crocosmia x crocosmiiflora (Montbretia).